The primary structure comprises 204 residues: Sec-independent protein translocase protein TatB (204 aa).

A helical membrane pass occupies residues 1–21; sequence MFDIGFSELLLIFIVGLVVLG. A compositionally biased stretch (polar residues) spans 154-166; the sequence is VVSSVDSIQNGQS. The interval 154-204 is disordered; that stretch reads VVSSVDSIQNGQSDLELDAQAEVDRQLAAMMDKYAPPDDVAENPISTEKTS.

Belongs to the TatB family. In terms of assembly, the Tat system comprises two distinct complexes: a TatABC complex, containing multiple copies of TatA, TatB and TatC subunits, and a separate TatA complex, containing only TatA subunits. Substrates initially bind to the TatABC complex, which probably triggers association of the separate TatA complex to form the active translocon.

The protein localises to the cell inner membrane. Its function is as follows. Part of the twin-arginine translocation (Tat) system that transports large folded proteins containing a characteristic twin-arginine motif in their signal peptide across membranes. Together with TatC, TatB is part of a receptor directly interacting with Tat signal peptides. TatB may form an oligomeric binding site that transiently accommodates folded Tat precursor proteins before their translocation. This Mannheimia succiniciproducens (strain KCTC 0769BP / MBEL55E) protein is Sec-independent protein translocase protein TatB.